Here is a 187-residue protein sequence, read N- to C-terminus: UPF0301 protein SO_3346 (187 aa).

This sequence belongs to the UPF0301 (AlgH) family.

The sequence is that of UPF0301 protein SO_3346 from Shewanella oneidensis (strain ATCC 700550 / JCM 31522 / CIP 106686 / LMG 19005 / NCIMB 14063 / MR-1).